Consider the following 195-residue polypeptide: Myosin regulatory light chain, striated muscle, 25 kDa isoform (195 aa).

Basic and acidic residues predominate over residues 1–17; it reads AKDKEKKEKKDKKKDDA. The disordered stretch occupies residues 1 to 39; sequence AKDKEKKEKKDKKKDDAPAEEAPAAAAAPAEEAAPTPSA. Residues 20–39 show a composition bias toward low complexity; sequence EEAPAAAAAPAEEAAPTPSA. 2 consecutive EF-hand domains span residues 55–90 and 124–159; these read NQIQ…IGRE and DTEG…VGDQ. Ca(2+)-binding residues include D68, D70, D72, and D79.

Myosin is a hexamer of 2 heavy chains and 4 light chains.

Functionally, plays an important role in regulation of muscle cell contractile activity. The sequence is that of Myosin regulatory light chain, striated muscle, 25 kDa isoform from Lumbricus terrestris (Common earthworm).